The chain runs to 309 residues: Isethionate sulfite-lyase activating enzyme (309 aa).

Positions 22–309 constitute a Radical SAM core domain; that stretch reads HDGPGIRTVV…VVAAEHATDG (288 aa). C36, C40, C43, C62, C68, C71, C75, C95, C98, C102, and C106 together coordinate [4Fe-4S] cluster. 42-44 serves as a coordination point for S-adenosyl-L-methionine; it reads WCS. 2 consecutive 4Fe-4S ferredoxin-type domains span residues 53–85 and 86–117; these read IELA…RADD and DTIS…YGTT. S-adenosyl-L-methionine is bound by residues G146, 195 to 197, and H268; that span reads DIK.

The protein belongs to the organic radical-activating enzymes family. Monomer. [4Fe-4S] cluster serves as cofactor.

It carries out the reaction glycyl-[protein] + reduced [flavodoxin] + S-adenosyl-L-methionine = glycin-2-yl radical-[protein] + semiquinone [flavodoxin] + 5'-deoxyadenosine + L-methionine + H(+). It functions in the pathway organosulfur degradation; alkanesulfonate degradation. Functionally, involved in an anaerobic respiration pathway that converts the sulfonate isethionate (2-hydroxyethanesulfonate) to ammonia, acetate and sulfide. Catalyzes activation of the isethionate sulfite-lyase IslA under anaerobic conditions by generation of an organic free radical on a glycine residue, via a homolytic cleavage of S-adenosyl-L-methionine (SAM). This chain is Isethionate sulfite-lyase activating enzyme, found in Oleidesulfovibrio alaskensis (strain ATCC BAA-1058 / DSM 17464 / G20) (Desulfovibrio alaskensis).